Here is a 569-residue protein sequence, read N- to C-terminus: Adenine deaminase (569 aa).

The protein belongs to the metallo-dependent hydrolases superfamily. Adenine deaminase family. Mn(2+) serves as cofactor.

The enzyme catalyses adenine + H2O + H(+) = hypoxanthine + NH4(+). In Desulfatibacillum aliphaticivorans, this protein is Adenine deaminase.